Reading from the N-terminus, the 388-residue chain is Salivary protein Tsal2A (388 aa).

Residues 1–18 form the signal peptide; sequence MSLLYGLLILAFTRSCLV. The N-linked (GlcNAc...) asparagine glycan is linked to N260.

The protein belongs to the DNA/RNA non-specific endonuclease family. A divalent metal cation is required as a cofactor. In terms of tissue distribution, saliva (at protein level).

The protein resides in the secreted. Binds double-stranded DNA (dsDNA) with high affinity. Binds double-stranded RNA. Binds single-stranded DNA with lower affinity and with a preference for purine-rich sequences. Shows residual nuclease activity for dsDNA. Facilitates blood meal intake by lowering the local viscosity created by the release of host DNA. The chain is Salivary protein Tsal2A from Glossina morsitans morsitans (Savannah tsetse fly).